The chain runs to 637 residues: Protein RRP6-like 1 (637 aa).

The region spanning V118 to L283 is the 3'-5' exonuclease domain. The region spanning N334–F414 is the HRDC domain. The segment covering V553–Y565 has biased composition (acidic residues). Residues V553–H624 are disordered. A compositionally biased stretch (polar residues) spans E580–T598. The span at V602–D614 shows a compositional bias: acidic residues.

The protein resides in the nucleus. Its subcellular location is the nucleoplasm. Functionally, acts as an important epigenetic regulator through multiple silencing mechanisms. Involved in transcriptional gene silencing (TGS). Plays a role for DNA methylation in the RNA-directed DNA methylation (RdDM) pathway. Contributes to the methylation status of the retrotransposon SN1. Required for DNA methylation only at a subset of RdDM target loci. Plays a regulatory role in RdDM through retention of non-coding RNAs (ncRNAs) in normal cells. Helps to retain Pol V-transcribed RNAs in chromatin to enable their scaffold function and is required for genome-wide Pol IV-dependent siRNA (24 nt siRNA) production that may involve retention of Pol IV transcripts. Involved in association with RRP6L2 in the silencing of the solo LTR locus. Controls levels of ncRNAs from the solo LTR locus. Seems to function independently of the RdDM pathway. Functions redundantly with RRP6L2 in the regulation of FLC locus. Participates in the maintenance of trimethylated 'Lys-27' (H3K27me3) at FLC locus via the regulation of antisense long non-coding RNAs (lncRNAs) and the regulation of diverse antisense RNAs derived from the FLC locus. Seems not involved in the exosomal RNA degradation. Can complement the growth defect of a yeast mutant lacking RRP6 exonuclease. The protein is Protein RRP6-like 1 of Arabidopsis thaliana (Mouse-ear cress).